The primary structure comprises 234 residues: MDKLLSLLGVSILAGLLLEAFAQTDLTGKVFVFPRQSETDYVKLIPRLDKPLQNFTVCFRAYSDLSRPHSLFSYNAEYGENELLIYKERIGEYELYIGNQGTKVHGVEEFASPVHFCTSWESSSGIAEFWVNGKPWVKKGLQKGYTVKNKPSIILGQEQDNYGGGFDNYQSFVGEIGDLNMWDSVLTPEEIKSVYQGVPLEPNILDWQALNYEMNGYAVIRPRCVALSSYNKIS.

Positions 1 to 22 (MDKLLSLLGVSILAGLLLEAFA) are cleaved as a signal peptide. The 200-residue stretch at 27–226 (TGKVFVFPRQ…YAVIRPRCVA (200 aa)) folds into the Pentraxin (PTX) domain. A glycan (N-linked (GlcNAc...) asparagine) is linked at Asn54. Cysteines 58 and 117 form a disulfide. The Ca(2+) site is built by Asn81, Glu158, Gln159, Asp160, and Gln170.

This sequence belongs to the pentraxin family. As to quaternary structure, homopentamer. Pentraxin (or pentaxin) have a discoid arrangement of 5 non-covalently bound subunits. The cofactor is Ca(2+).

Its subcellular location is the secreted. This chain is Serum amyloid P-component (APCS), found in Mesocricetus auratus (Golden hamster).